A 151-amino-acid polypeptide reads, in one-letter code: Protein ripply1 (151 aa).

Positions 57-60 (WRPW) match the WRPW motif motif. The interval 96–131 (HPVRLFWPKSRSFDYLYSAGEILLQNFPVQATINLY) is ripply homology domain. The segment at 130-151 (LYEDSDSEEEEEDEEQEDEEEK) is disordered. Residues 132 to 151 (EDSDSEEEEEDEEQEDEEEK) show a composition bias toward acidic residues.

Belongs to the ripply family.

Its subcellular location is the nucleus. In terms of biological role, plays a role in somitogenesis. Essential for transcriptional repression of the segmental patterning genes, thus terminating the segmentation program in the presomitic mesoderm, and also required for the maintenance of rostrocaudal polarity in somites. This chain is Protein ripply1, found in Homo sapiens (Human).